Consider the following 188-residue polypeptide: Elongation factor P (188 aa).

It belongs to the elongation factor P family.

The protein resides in the cytoplasm. It participates in protein biosynthesis; polypeptide chain elongation. Functionally, involved in peptide bond synthesis. Stimulates efficient translation and peptide-bond synthesis on native or reconstituted 70S ribosomes in vitro. Probably functions indirectly by altering the affinity of the ribosome for aminoacyl-tRNA, thus increasing their reactivity as acceptors for peptidyl transferase. This chain is Elongation factor P, found in Bifidobacterium longum (strain DJO10A).